The chain runs to 189 residues: Crossover junction endodeoxyribonuclease RuvC (189 aa).

Catalysis depends on residues Asp-12, Glu-72, and Asp-147. Residues Asp-12, Glu-72, and Asp-147 each coordinate Mg(2+).

It belongs to the RuvC family. In terms of assembly, homodimer which binds Holliday junction (HJ) DNA. The HJ becomes 2-fold symmetrical on binding to RuvC with unstacked arms; it has a different conformation from HJ DNA in complex with RuvA. In the full resolvosome a probable DNA-RuvA(4)-RuvB(12)-RuvC(2) complex forms which resolves the HJ. Mg(2+) serves as cofactor.

Its subcellular location is the cytoplasm. It carries out the reaction Endonucleolytic cleavage at a junction such as a reciprocal single-stranded crossover between two homologous DNA duplexes (Holliday junction).. Functionally, the RuvA-RuvB-RuvC complex processes Holliday junction (HJ) DNA during genetic recombination and DNA repair. Endonuclease that resolves HJ intermediates. Cleaves cruciform DNA by making single-stranded nicks across the HJ at symmetrical positions within the homologous arms, yielding a 5'-phosphate and a 3'-hydroxyl group; requires a central core of homology in the junction. The consensus cleavage sequence is 5'-(A/T)TT(C/G)-3'. Cleavage occurs on the 3'-side of the TT dinucleotide at the point of strand exchange. HJ branch migration catalyzed by RuvA-RuvB allows RuvC to scan DNA until it finds its consensus sequence, where it cleaves and resolves the cruciform DNA. In Porphyromonas gingivalis (strain ATCC BAA-308 / W83), this protein is Crossover junction endodeoxyribonuclease RuvC.